The sequence spans 273 residues: Large ribosomal subunit protein uL29m (273 aa).

The segment covering 247–258 (PLRHDRWEKGQE) has biased composition (basic and acidic residues). The disordered stretch occupies residues 247–273 (PLRHDRWEKGQEENSGGETEDGNAPSN).

This sequence belongs to the universal ribosomal protein uL29 family. In terms of assembly, component of the mitochondrial large ribosomal subunit. Mature mitochondrial ribosomes consist of a small (37S) and a large (54S) subunit. The 37S subunit contains at least 33 different proteins and 1 molecule of RNA (15S). The 54S subunit contains at least 45 different proteins and 1 molecule of RNA (21S).

It localises to the mitochondrion. The sequence is that of Large ribosomal subunit protein uL29m (mrpl4) from Aspergillus niger (strain ATCC MYA-4892 / CBS 513.88 / FGSC A1513).